We begin with the raw amino-acid sequence, 574 residues long: Proline--tRNA ligase (574 aa).

The protein belongs to the class-II aminoacyl-tRNA synthetase family. ProS type 1 subfamily. Homodimer.

It is found in the cytoplasm. The enzyme catalyses tRNA(Pro) + L-proline + ATP = L-prolyl-tRNA(Pro) + AMP + diphosphate. Its function is as follows. Catalyzes the attachment of proline to tRNA(Pro) in a two-step reaction: proline is first activated by ATP to form Pro-AMP and then transferred to the acceptor end of tRNA(Pro). As ProRS can inadvertently accommodate and process non-cognate amino acids such as alanine and cysteine, to avoid such errors it has two additional distinct editing activities against alanine. One activity is designated as 'pretransfer' editing and involves the tRNA(Pro)-independent hydrolysis of activated Ala-AMP. The other activity is designated 'posttransfer' editing and involves deacylation of mischarged Ala-tRNA(Pro). The misacylated Cys-tRNA(Pro) is not edited by ProRS. The chain is Proline--tRNA ligase from Nautilia profundicola (strain ATCC BAA-1463 / DSM 18972 / AmH).